The primary structure comprises 758 residues: 5-methyltetrahydropteroyltriglutamate--homocysteine methyltransferase (758 aa).

Residues 16–19 (RELK) and lysine 117 each bind 5-methyltetrahydropteroyltri-L-glutamate. Residues 436–438 (IGS) and glutamate 489 each bind L-homocysteine. L-methionine-binding positions include 436-438 (IGS) and glutamate 489. Residues 520–521 (RC) and tryptophan 566 each bind 5-methyltetrahydropteroyltri-L-glutamate. Aspartate 604 is an L-homocysteine binding site. Aspartate 604 contacts L-methionine. Glutamate 610 contacts 5-methyltetrahydropteroyltri-L-glutamate. Residues histidine 646, cysteine 648, and glutamate 670 each contribute to the Zn(2+) site. Catalysis depends on histidine 699, which acts as the Proton donor. Zn(2+) is bound at residue cysteine 731.

It belongs to the vitamin-B12 independent methionine synthase family. Zn(2+) serves as cofactor.

It catalyses the reaction 5-methyltetrahydropteroyltri-L-glutamate + L-homocysteine = tetrahydropteroyltri-L-glutamate + L-methionine. The protein operates within amino-acid biosynthesis; L-methionine biosynthesis via de novo pathway; L-methionine from L-homocysteine (MetE route): step 1/1. In terms of biological role, catalyzes the transfer of a methyl group from 5-methyltetrahydrofolate to homocysteine resulting in methionine formation. The polypeptide is 5-methyltetrahydropteroyltriglutamate--homocysteine methyltransferase (Ruthia magnifica subsp. Calyptogena magnifica).